The following is a 2292-amino-acid chain: MKGHQFKSWIFELREILREIKNSHYFLDSWTQLNSVVSFIHIFFHQERFIKLLDSRIWSILLSRNSHLQGSTSNRYLTIKGVVLFVVSVLIYRINNRKMVERKNLYLTGLLPIPMNFIGPRNDTLEESFGSSNINRLIVSLLYLPKGKKISESCFLDPKESTWVLPITKKCIMPESNWGSRWWRNWLGKKRDSSCKISNETVTGIEISFKEKDIKYLEFLFVYYMDDPIRKDHDWELFDRLSPRKRRNIINLNSGQLFEILVKDWICYLMFAFREKIPIEAEGFFKQQGAGSTIQSNDIEHVSHLFSRNKWAISLQNCAQFHMWQFRQDLFFSWGKNPHESDFLRNISRENWIWLDNVWLENKDRFFSKVRNVSSNIQYDSTRSSFVQVTDFSQLKGSSDRSRDHFDSIRNEDSEYHTLINQREIQQLKERSILWDPSFLQMERTEIESDRSPKCLSGYSSMSRLFTEREKQMNNHLLPEEIEEFLVLGNRTRSIRSFFSDRWSELHLGSNPTERSTRDHKLLKKEQDVSFVPSRRSENKEIVNIFKIITYLQNTVSIHPISSDPGCDMVPKDELDMDSSNKISFLNKNPFFDLFHLFHDRNRGGYTLHHDFESEERFQEMADLFTLSITEPDLVYHKGFALSIDSYRLDQKQFLNEVFNSRDESKKKSLLVLPPIFYEENESFYRRIRKKWVRTSCGNDLEDPKPKIVVFASNNIMEAVNQYRLIRNLIQIQYSTYGYIRNVLNRFLLMNRSDRNFEYGIQRDQIGNDTLNHRTIMKYTINQHLSNLKKSQKKWFDPLIFISRTERSMNRDPNAYRYKWSNGSKNLQEHLEHFISEQKSRFQVVFDRLRINQYSIDWSEVIDKKDLSKSLPFFLSKLLLFLSKFLLFLSNSLPFFFVSFGNIPIHRSEIHIYELKGPNDQLCNQLLESIGLQIVHLKKLKPFLLDDHDTSQKSKFLINGGTISPFLFNKIPKWMIDSFHTRKNRRKSFDNTDSYFSMISHDQDNWLNPVKPFHRSSLISSFYKANRLRFLNNPHHFCFYCNKRFPFYVEKARINNYDFTYGQFLNILFIRNKIFSLRGGKKKYAFLERDTISPIELQVSNIFIPNDFPQNGDERYNFYKSFHFPIRSDPFVRRAIYSIADISGTLLTEGQIVNFERTYCQPLSDMNLSDSEGKNLHQYLNFNSNMGLIHTPCSEKYLPSEKRKKRGLCLKKCLEKGQMYRTFQRDSAFSTLSKWNIFQTYMPWFLTSTGYNYLNLLFLDTFSDLLPILSSSQKFVSIFHDIMHGLDISWRILQKRLCLPQWNLISEISSKCLHNLLLSKEMIHRNNESPLISTHLRSPNVREFLYSILFLLLVAGYLVRTHLLFVSRTYSELQTEFERVKSLMIPSYMIELRKLLDRYPTSELNSFWLKNLFLVAREQLGDSLEEIRGSASGGNMLWGGGPTYGVKSIRSKKKYLNINLIDIIDFISIIPNPINRIAFSRNTRHLSHISKETYSLIRKRKKVNGDWIDDKIESWVSNSDSVDDKEREFLVQFSTLTTEKRIDQILLSLTQSDHLSKNDSGYQMIEQPGAIYLRYLVDIHKKYLMNYEFNTSCLAERRIFLAHYQTITYSQTSCGANSFHFPSHGKPFSLRLALSLSRGILVIGSIGTGRSYLVKYLATNSYVPFITVFLNKFLDNKPKGFLIDDSDDIDDSDDIDRDLDTELELLTMMNALTMDMMPEIDRFYITLQFELAKAMSPCIIWIPNIHDLDVNESNYLSLGLLVNYLSRDCERCSTRNILVIASTHIPQKVDPALIAPNKLNTCIKIRRLLIPQQRKHFFTLSYTRGFHLEKKMFHTNGFGSITMGSNVRDLVALTNEALSISITQKKSIIDTNIIRSAFHRQTWDLRSQVRSVQDHGILFYQIGRAVAQNVLLSNCSIDPISIYMKKKSCNEGDSYLYKWYFELGTSMKKLTILLYLLSCSAGSVAQDLWSLPELDEKNGITSYGLVENDSDLVHGLLEVEGTLVGSSRTEKDCSQFDNDRATLLLRPEPRNPLDMMQNGSCSIVDQRFLYEQYKSEFEEGEGEGVLDPQRIEEDLFNHIVWAPRIWRPWGFLFDCIESPNELGFPYWARSFRGKRIIYDEEDGLQENDSEFLQSGTMQYQTRDRSSKEQGFFRISQFIWDPADPLFFLFKDQPFVSVFSHREFFADEEMSKGLLTSQTDLPTSIYKRWFIKNTQEKYFELLIYRQRWLRTNSSLSNGFFRSNTPSESYQYLSKLFLSNGTLLDQMTKTLLRKRWLFPDEMVLAICYNNESLV.

1644-1651 serves as a coordination point for ATP; sequence GSIGTGRS.

The protein belongs to the Ycf2 family.

It localises to the plastid. The protein localises to the chloroplast stroma. Functionally, probable ATPase of unknown function. Its presence in a non-photosynthetic plant (Epifagus virginiana) and experiments in tobacco indicate that it has an essential function which is probably not related to photosynthesis. In Morus indica (Mulberry), this protein is Protein Ycf2.